Reading from the N-terminus, the 491-residue chain is Synaptotagmin-9 (491 aa).

Residues 1–52 (MPGARDALCHQALQLLAELCARGALEHDSCQDFIYHLRDRARPRLRDPDISV) are Vesicular-facing. A cysteine motif region spans residues 9-31 (CHQALQLLAELCARGALEHDSCQ). The helical transmembrane segment at 53-73 (SLLTLVVTACGLALFGVSLFV) threads the bilayer. Residues 74–491 (SWKLCWVPWR…AHWHSLVEKR (418 aa)) are Cytoplasmic-facing. The residue at position 177 (Ser-177) is a Phosphoserine. C2 domains lie at 220 to 341 (ACGK…ILWK) and 352 to 485 (DLGE…AHWH). Asp-251, Asp-257, Asp-309, Phe-310, Asp-311, Ser-314, Asp-317, Asp-383, Asp-389, Asp-443, and Asp-445 together coordinate Ca(2+).

This sequence belongs to the synaptotagmin family. As to quaternary structure, homodimer; disulfide-linked via the cysteine motif. Can also form heterodimers with SYT3, SYT6, SYT7 and SYT10. Ca(2+) serves as cofactor.

It localises to the cytoplasmic vesicle. The protein resides in the secretory vesicle. It is found in the synaptic vesicle membrane. Functionally, may be involved in Ca(2+)-dependent exocytosis of secretory vesicles through Ca(2+) and phospholipid binding to the C2 domain or may serve as Ca(2+) sensors in the process of vesicular trafficking and exocytosis. This chain is Synaptotagmin-9 (SYT9), found in Homo sapiens (Human).